A 605-amino-acid chain; its full sequence is Probable Xaa-Pro aminopeptidase P (605 aa).

Residues Asp-402, Asp-413, Glu-511, and Glu-525 each coordinate Mn(2+).

This sequence belongs to the peptidase M24B family. Mn(2+) serves as cofactor.

The catalysed reaction is Release of any N-terminal amino acid, including proline, that is linked to proline, even from a dipeptide or tripeptide.. Catalyzes the removal of a penultimate prolyl residue from the N-termini of peptides. The chain is Probable Xaa-Pro aminopeptidase P (AMPP) from Leptosphaeria maculans (strain JN3 / isolate v23.1.3 / race Av1-4-5-6-7-8) (Blackleg fungus).